The chain runs to 357 residues: 3-dehydroquinate synthase (357 aa).

NAD(+) is bound by residues 104–108 (GVVGD), 128–129 (TT), Lys-141, and 168–171 (FLET). Residues Glu-183, His-243, and His-260 each contribute to the Zn(2+) site.

The protein belongs to the sugar phosphate cyclases superfamily. Dehydroquinate synthase family. It depends on NAD(+) as a cofactor. Co(2+) is required as a cofactor. Requires Zn(2+) as cofactor.

It localises to the cytoplasm. The enzyme catalyses 7-phospho-2-dehydro-3-deoxy-D-arabino-heptonate = 3-dehydroquinate + phosphate. It functions in the pathway metabolic intermediate biosynthesis; chorismate biosynthesis; chorismate from D-erythrose 4-phosphate and phosphoenolpyruvate: step 2/7. Functionally, catalyzes the conversion of 3-deoxy-D-arabino-heptulosonate 7-phosphate (DAHP) to dehydroquinate (DHQ). The chain is 3-dehydroquinate synthase from Streptococcus pyogenes serotype M18 (strain MGAS8232).